The sequence spans 142 residues: Large-conductance mechanosensitive channel (142 aa).

Transmembrane regions (helical) follow at residues 14-34 and 86-106; these read VVDL…VSSL and FGQF…VFLV.

Belongs to the MscL family. Homopentamer.

It is found in the cell inner membrane. In terms of biological role, channel that opens in response to stretch forces in the membrane lipid bilayer. May participate in the regulation of osmotic pressure changes within the cell. This is Large-conductance mechanosensitive channel from Rhizorhabdus wittichii (strain DSM 6014 / CCUG 31198 / JCM 15750 / NBRC 105917 / EY 4224 / RW1) (Sphingomonas wittichii).